The chain runs to 146 residues: Large ribosomal subunit protein uL15 (146 aa).

Residues 1-57 (MKLHELKPAQGSRKTRNRVGRGSSSGNGKTAGRGQKGQKARSGGNIRSGFEGGQTPL) are disordered. Gly residues predominate over residues 23 to 35 (SSSGNGKTAGRGQ).

The protein belongs to the universal ribosomal protein uL15 family. Part of the 50S ribosomal subunit.

Functionally, binds to the 23S rRNA. In Streptococcus mutans serotype c (strain ATCC 700610 / UA159), this protein is Large ribosomal subunit protein uL15.